A 524-amino-acid chain; its full sequence is Secologanin synthase 1 (524 aa).

Residues 1–11 (MEMDMDTIRKA) lie on the Lumenal side of the membrane. A helical transmembrane segment spans residues 12–32 (IAATIFALVMAWAWRVLDWAW). Residues 33-524 (FTPKRIEKRL…SHVIYKKLES (492 aa)) lie on the Cytoplasmic side of the membrane. C470 is a heme binding site.

Belongs to the cytochrome P450 family. Requires heme as cofactor. In terms of tissue distribution, upper and lower leaf epidermis.

It is found in the endoplasmic reticulum membrane. It carries out the reaction loganin + reduced [NADPH--hemoprotein reductase] + O2 = secologanin + oxidized [NADPH--hemoprotein reductase] + 2 H2O + H(+). The enzyme catalyses secologanin + reduced [NADPH--hemoprotein reductase] + O2 = secoxyloganin + oxidized [NADPH--hemoprotein reductase] + H2O + 2 H(+). The protein operates within alkaloid biosynthesis; secologanin biosynthesis. Its function is as follows. Component of the seco-iridoid and derivatives monoterpenoid indole alkaloids (MIAs, e.g. secologanin) biosynthesis pathway. Catalyzes the conversion of loganin into secologanin. Catalyzes the conversion of secologanin into secoxyloganin. The protein is Secologanin synthase 1 of Catharanthus roseus (Madagascar periwinkle).